A 179-amino-acid chain; its full sequence is Orotate phosphoribosyltransferase (179 aa).

Residues Arg-94, Lys-95, Lys-98, His-100, and Glu-120–Ser-128 contribute to the 5-phospho-alpha-D-ribose 1-diphosphate site. Thr-124 and Arg-152 together coordinate orotate.

The protein belongs to the purine/pyrimidine phosphoribosyltransferase family. PyrE subfamily. Homodimer. Mg(2+) is required as a cofactor.

The enzyme catalyses orotidine 5'-phosphate + diphosphate = orotate + 5-phospho-alpha-D-ribose 1-diphosphate. It participates in pyrimidine metabolism; UMP biosynthesis via de novo pathway; UMP from orotate: step 1/2. Its function is as follows. Catalyzes the transfer of a ribosyl phosphate group from 5-phosphoribose 1-diphosphate to orotate, leading to the formation of orotidine monophosphate (OMP). This Mycobacterium leprae (strain TN) protein is Orotate phosphoribosyltransferase.